A 608-amino-acid chain; its full sequence is Isocitrate dehydrogenase kinase/phosphatase (608 aa).

ATP-binding positions include 327-333 (APGIKGL) and Lys-348. Asp-383 is a catalytic residue.

It belongs to the AceK family.

It is found in the cytoplasm. It catalyses the reaction L-seryl-[isocitrate dehydrogenase] + ATP = O-phospho-L-seryl-[isocitrate dehydrogenase] + ADP + H(+). Its function is as follows. Bifunctional enzyme which can phosphorylate or dephosphorylate isocitrate dehydrogenase (IDH) on a specific serine residue. This is a regulatory mechanism which enables bacteria to bypass the Krebs cycle via the glyoxylate shunt in response to the source of carbon. When bacteria are grown on glucose, IDH is fully active and unphosphorylated, but when grown on acetate or ethanol, the activity of IDH declines drastically concomitant with its phosphorylation. This is Isocitrate dehydrogenase kinase/phosphatase from Burkholderia ambifaria (strain ATCC BAA-244 / DSM 16087 / CCUG 44356 / LMG 19182 / AMMD) (Burkholderia cepacia (strain AMMD)).